The following is a 293-amino-acid chain: Nucleotide-binding protein BA_5384/GBAA_5384/BAS5004 (293 aa).

Position 14–21 (14–21 (GMSGAGKT)) interacts with ATP. 65–68 (DLRG) provides a ligand contact to GTP.

This sequence belongs to the RapZ-like family.

Displays ATPase and GTPase activities. In Bacillus anthracis, this protein is Nucleotide-binding protein BA_5384/GBAA_5384/BAS5004.